Consider the following 435-residue polypeptide: ATP-dependent RNA helicase RhlB (435 aa).

The Q motif motif lies at 9-37 (QKFADLGLNPQVVEGLEKKGFEFCTPIQA). Residues 40 to 219 (LPVLLSGQDI…FEHMHNPEHV (180 aa)) form the Helicase ATP-binding domain. 53–60 (AQTGTGKT) provides a ligand contact to ATP. The DEAD box signature appears at 165–168 (DEAD). The Helicase C-terminal domain maps to 245–390 (ALLQTLIEEE…VSDYDSSALI (146 aa)). Positions 395 to 435 (APVRTPSARNQQRRTNTGGARSGDRKSNNRRPRQPRQHKEA) are disordered. The segment covering 401–413 (SARNQQRRTNTGG) has biased composition (polar residues). A compositionally biased stretch (basic residues) spans 422 to 435 (NNRRPRQPRQHKEA).

Belongs to the DEAD box helicase family. RhlB subfamily. As to quaternary structure, component of the RNA degradosome, which is a multiprotein complex involved in RNA processing and mRNA degradation.

The protein localises to the cytoplasm. The enzyme catalyses ATP + H2O = ADP + phosphate + H(+). Its function is as follows. DEAD-box RNA helicase involved in RNA degradation. Has RNA-dependent ATPase activity and unwinds double-stranded RNA. The chain is ATP-dependent RNA helicase RhlB from Vibrio vulnificus (strain CMCP6).